Here is a 438-residue protein sequence, read N- to C-terminus: Plasmalemma vesicle-associated protein (438 aa).

Residues 1-26 (MGLSMDRSPYARTGDQQRGCWYYLRY) lie on the Cytoplasmic side of the membrane. The chain crosses the membrane as a helical; Signal-anchor for type II membrane protein span at residues 27–47 (FFLFVSLIQFLIILGLVLFMI). The Extracellular portion of the chain corresponds to 48–438 (YGNVHATTES…VVNPAAQPSG (391 aa)). N-linked (GlcNAc...) asparagine glycans are attached at residues asparagine 82, asparagine 88, asparagine 112, and asparagine 150. Coiled-coil stretches lie at residues 140–160 (KQCQ…LFKL), 189–224 (KRQT…QSLC), and 281–383 (EELA…ISAL). Residues 391-413 (SLPAVPPRVSGPPPNPPPIDPAS) are disordered. Pro residues predominate over residues 394–410 (AVPPRVSGPPPNPPPID).

As to quaternary structure, homodimer. Expressed in lung, kidney, spleen, heart, muscle, eye, pancreas, thyroid, thymus, submaxillary gland, prostate, epididymis, uterus and liver.

The protein resides in the cell membrane. Its subcellular location is the membrane. It is found in the caveola. It localises to the cytoplasm. The protein localises to the perinuclear region. Its function is as follows. Endothelial cell-specific membrane protein involved in the formation of the diaphragms that bridge endothelial fenestrae. It is also required for the formation of stomata of caveolae and transendothelial channels. Functions in microvascular permeability, endothelial fenestrae contributing to the passage of water and solutes and regulating transcellular versus paracellular flow in different organs. Plays a specific role in embryonic development. The polypeptide is Plasmalemma vesicle-associated protein (Plvap) (Mus musculus (Mouse)).